The chain runs to 1035 residues: FACT complex subunit SPT16 (1035 aa).

Residues 432–500 (FLKKEDEEEE…AKRRLTEQKG (69 aa)) adopt a coiled-coil conformation. 2 disordered regions span residues 491 to 520 (AKRR…ASQV) and 920 to 1035 (EQGG…KRKK). Residues 499–519 (KGGQQTMKARKSNVSYKNASQ) are compositionally biased toward polar residues. The span at 929-985 (PDGEGSDAAEGDSESELDDETFNPSEDEEEEEEDSDEDYSDETEDSVDSEESADSEE) shows a compositional bias: acidic residues. Over residues 986–1006 (ESGKDWDELEEEARKADRESL) the composition is skewed to basic and acidic residues.

It belongs to the peptidase M24 family. SPT16 subfamily. Component of the FACT complex (also called the DUF complex), a stable heterodimer of ssrp1 and supt16h. May also be a component of a ck2-spt16-ssrp1 complex composed of ssrp1, supt16h, csnk2a1, csnk2a2 and csnk2b. The FACT complex may also interact with vcp.

The protein resides in the nucleus. It is found in the chromosome. In terms of biological role, component of the FACT complex, a general chromatin factor that acts to reorganize nucleosomes. The FACT complex is involved in multiple processes that require DNA as a template such as mRNA elongation, DNA replication and DNA repair. During transcription elongation the FACT complex acts as a histone chaperone that both destabilizes and restores nucleosomal structure. It facilitates the passage of RNA polymerase II and transcription by promoting the dissociation of one histone H2A-H2B dimer from the nucleosome, then subsequently promotes the reestablishment of the nucleosome following the passage of RNA polymerase II. This Xenopus laevis (African clawed frog) protein is FACT complex subunit SPT16 (supt16h).